A 220-amino-acid polypeptide reads, in one-letter code: Sec-independent protein translocase protein TatB (220 aa).

Residues Met1–Gly21 traverse the membrane as a helical segment. The interval Val190–Gln220 is disordered.

It belongs to the TatB family. The Tat system comprises two distinct complexes: a TatABC complex, containing multiple copies of TatA, TatB and TatC subunits, and a separate TatA complex, containing only TatA subunits. Substrates initially bind to the TatABC complex, which probably triggers association of the separate TatA complex to form the active translocon.

Its subcellular location is the cell inner membrane. Part of the twin-arginine translocation (Tat) system that transports large folded proteins containing a characteristic twin-arginine motif in their signal peptide across membranes. Together with TatC, TatB is part of a receptor directly interacting with Tat signal peptides. TatB may form an oligomeric binding site that transiently accommodates folded Tat precursor proteins before their translocation. The polypeptide is Sec-independent protein translocase protein TatB (Yersinia pseudotuberculosis serotype I (strain IP32953)).